The sequence spans 359 residues: ATP-dependent 6-phosphofructokinase 1 (359 aa).

ATP contacts are provided by residues Gly-14, 78-79 (KG), and 115-118 (GDGS). Asp-116 provides a ligand contact to Mg(2+). Residues 139 to 141 (TID), Arg-176, 183 to 185 (MGR), Glu-236, Arg-277, and 283 to 286 (HIQR) contribute to the substrate site. Catalysis depends on Asp-141, which acts as the Proton acceptor.

It belongs to the phosphofructokinase type A (PFKA) family. Mixed-substrate PFK group III subfamily. In terms of assembly, homodimer or homotetramer. Mg(2+) is required as a cofactor.

The protein resides in the cytoplasm. It catalyses the reaction beta-D-fructose 6-phosphate + ATP = beta-D-fructose 1,6-bisphosphate + ADP + H(+). Its pathway is carbohydrate degradation; glycolysis; D-glyceraldehyde 3-phosphate and glycerone phosphate from D-glucose: step 3/4. Catalyzes the phosphorylation of D-fructose 6-phosphate to fructose 1,6-bisphosphate by ATP, the first committing step of glycolysis. The sequence is that of ATP-dependent 6-phosphofructokinase 1 from Nostoc sp. (strain PCC 7120 / SAG 25.82 / UTEX 2576).